We begin with the raw amino-acid sequence, 190 residues long: uncharacterized protein (190 aa).

A helical membrane pass occupies residues 1 to 21; the sequence is MLVMSITFSFVAVALLVYFYV. The segment covering 103 to 114 has biased composition (basic and acidic residues); that stretch reads REEVCARPEHRS. Residues 103–130 are disordered; that stretch reads REEVCARPEHRSAPSRAGSSAAKPTPTK.

To B.burgdorferi BB0265.

The protein localises to the membrane. This is an uncharacterized protein from Treponema pallidum (strain Nichols).